The primary structure comprises 1335 residues: Phospholipid-transporting ATPase IK (1335 aa).

Over 1-74 (MDGVHLGENL…LYEQFHRMSN (74 aa)) the chain is Cytoplasmic. A helical transmembrane segment spans residues 75 to 95 (LYFLFIIILQGIPEISTLPWF). The Exoplasmic loop segment spans residues 96 to 295 (TLFAPLVCLF…LDLMMNKLVA (200 aa)). A helical membrane pass occupies residues 296 to 316 (LIFLSLVIASLLLTVGFTFMV). Over 317–339 (KQFKAKHYYMSPTHGRSDAMESF) the chain is Cytoplasmic. Residues 340–360 (FIFWGFLILLSVMVPMAMFII) form a helical membrane-spanning segment. Over 361–917 (AEFIYLGNSI…YMRVCKFLRY (557 aa)) the chain is Exoplasmic loop. Residue Asp407 is the 4-aspartylphosphate intermediate of the active site. Residues Asp407, Lys408, Thr409, Glu504, Phe545, Lys568, Arg601, Thr681, Gly682, Asp683, Arg831, and Lys837 each contribute to the ATP site. A Mg(2+)-binding site is contributed by Asp407. Thr409 lines the Mg(2+) pocket. Asp857 lines the Mg(2+) pocket. Positions 860 and 861 each coordinate ATP. Asp861 is a Mg(2+) binding site. A helical transmembrane segment spans residues 918–938 (FFYKTVASMMAQIWFSLVNGF). At 939–946 (SAQPLYEG) the chain is on the cytoplasmic side. A helical transmembrane segment spans residues 947-967 (WFLALFNLLYSTLPVLYIGLF). Topologically, residues 968-995 (EQDVTAEKSLKMPELYMAGQKGELFNYS) are exoplasmic loop. Residues 996 to 1016 (IFMQAITHGTITSMINFFVTV) traverse the membrane as a helical segment. Over 1017 to 1033 (MVSSDMSKAGSSHDYQS) the chain is Cytoplasmic. Residues 1034-1054 (LGVLVAISSLLSVTLEVMLVV) form a helical membrane-spanning segment. Residue Lys1055 is a topological domain, exoplasmic loop. Residues 1056 to 1076 (YWTLLFVGAVVLSLSSYVLMT) traverse the membrane as a helical segment. Residues 1077 to 1104 (SLTQSLWMYRISPKTFPFLFADYNVLFE) are Cytoplasmic-facing. A helical transmembrane segment spans residues 1105–1125 (PCSLLLIVLNVALNVLPMLAL). At 1126-1335 (RTIHRTVLKQ…SQLEVPRKQS (210 aa)) the chain is on the exoplasmic loop side. Disordered stretches follow at residues 1192–1215 (VDDS…PLQN), 1236–1280 (FGKG…GKLL), and 1314–1335 (SPLW…RKQS). Polar residues-rich tracts occupy residues 1246 to 1255 (PNTSSQTMEK) and 1266 to 1276 (QKLPTTTSATS).

It belongs to the cation transport ATPase (P-type) (TC 3.A.3) family. Type IV subfamily. It depends on Mg(2+) as a cofactor. As to expression, expressed in testis, specifically in spermatids within seminiferous tubules (at protein level).

The protein resides in the cytoplasmic vesicle. It localises to the secretory vesicle. Its subcellular location is the acrosome membrane. It is found in the endoplasmic reticulum membrane. It catalyses the reaction ATP + H2O + phospholipidSide 1 = ADP + phosphate + phospholipidSide 2.. The enzyme catalyses a 1,2-diacyl-sn-glycero-3-phospho-L-serine(out) + ATP + H2O = a 1,2-diacyl-sn-glycero-3-phospho-L-serine(in) + ADP + phosphate + H(+). P4-ATPase flippase which catalyzes the hydrolysis of ATP coupled to the transport of aminophospholipids from the outer to the inner leaflet of various membranes and ensures the maintenance of asymmetric distribution of phospholipids. Phospholipid translocation also seems to be implicated in vesicle formation and in uptake of lipid signaling molecules. May be responsible for the maintenance of asymmetric distribution of phosphatidylserine (PS) in spermatozoa membranes. Involved in acrosome reactions and binding of spermatozoa to zona pellucida. The sequence is that of Phospholipid-transporting ATPase IK from Mus musculus (Mouse).